The sequence spans 537 residues: Asparagine-rich protein (537 aa).

5 disordered regions span residues Y1–N22, N187–F254, Y336–D372, L399–G479, and D509–D528. Composition is skewed to low complexity over residues Y336 to N347 and L399 to N469. The segment covering N470–G479 has biased composition (acidic residues). Positions D509 to K518 are enriched in basic and acidic residues.

In Plasmodium falciparum, this protein is Asparagine-rich protein.